Here is a 147-residue protein sequence, read N- to C-terminus: uncharacterized protein (147 aa).

This is an uncharacterized protein from Schizosaccharomyces pombe (strain 972 / ATCC 24843) (Fission yeast).